Here is a 424-residue protein sequence, read N- to C-terminus: GTPase HflX (424 aa).

Positions 194–364 (YTVALTGYTG…AVVEMLPEKV (171 aa)) constitute a Hflx-type G domain. GTP is bound by residues 200 to 207 (GYTGAGKT), 225 to 229 (FATLS), 246 to 249 (DTIG), 314 to 317 (NKID), and 342 to 344 (SAA). 2 residues coordinate Mg(2+): Thr-207 and Thr-227.

Belongs to the TRAFAC class OBG-HflX-like GTPase superfamily. HflX GTPase family. In terms of assembly, monomer. Associates with the 50S ribosomal subunit. Mg(2+) serves as cofactor.

The protein localises to the cytoplasm. GTPase that associates with the 50S ribosomal subunit and may have a role during protein synthesis or ribosome biogenesis. The chain is GTPase HflX from Thermofilum pendens (strain DSM 2475 / Hrk 5).